A 281-amino-acid polypeptide reads, in one-letter code: uncharacterized protein (281 aa).

The next 4 helical transmembrane spans lie at 8 to 28 (ALPV…FIWS), 97 to 117 (LAVA…RGYG), 147 to 167 (PARI…GLAV), and 210 to 230 (IASV…IVPA).

The protein to S.pombe bem46 and yeast YNL320w.

The protein resides in the cell membrane. This is an uncharacterized protein from Mycobacterium tuberculosis (strain CDC 1551 / Oshkosh).